A 571-amino-acid chain; its full sequence is Sulfite reductase [NADPH] hemoprotein beta-component (571 aa).

[4Fe-4S] cluster is bound by residues cysteine 435, cysteine 441, cysteine 480, and cysteine 484. Cysteine 484 is a siroheme binding site.

Belongs to the nitrite and sulfite reductase 4Fe-4S domain family. Alpha(8)-beta(8). The alpha component is a flavoprotein, the beta component is a hemoprotein. The cofactor is siroheme. Requires [4Fe-4S] cluster as cofactor.

It carries out the reaction hydrogen sulfide + 3 NADP(+) + 3 H2O = sulfite + 3 NADPH + 4 H(+). Its pathway is sulfur metabolism; hydrogen sulfide biosynthesis; hydrogen sulfide from sulfite (NADPH route): step 1/1. Its function is as follows. Component of the sulfite reductase complex that catalyzes the 6-electron reduction of sulfite to sulfide. This is one of several activities required for the biosynthesis of L-cysteine from sulfate. The chain is Sulfite reductase [NADPH] hemoprotein beta-component from Erwinia tasmaniensis (strain DSM 17950 / CFBP 7177 / CIP 109463 / NCPPB 4357 / Et1/99).